We begin with the raw amino-acid sequence, 486 residues long: MVQLNQNFIDTITQELPAHLSMDEFIAACDRPLRRSIRVNTLKISSDDFKTLMQPKGWTFDPIPWCEDGFWISYDEEEQLGNALEHIQGLFYIQEASSMLPPTALFTPSAFTTSAKWQCVLDLASAPGSKTTQMAALMQNQGLLVANEYSASRVKVLHANVLRMGASHCALTHFDGRVFGEYLYESFDAVLIDAPCGGEGTVRKDVDALKHWSLDDVLAISETQKALIESAFLALKPGGSLVYSTCTLNRLENQGVCEYLKQVYGDAVQFESLSDLFDGAERATTAEGFLHVWPQIYDSEGFFVAKLTKTASVPRLQPEPKLQKNFPFTPASAKQAQGIKDYFQQDLGISLPDELIMVRDDEFWLFPHEFNAFIGRMRFQRIGIKLADSSKHGFKVRHEAIIALAGKQLSPTAKTVDVSDVEAKEYLMGRDIPLATADKAQGEVIVCYGGAPLGMAKHLGNKLKNNLPRDLVKDKVLLLPEQTKSL.

Residues 124-130, glutamate 148, aspartate 175, and aspartate 193 contribute to the S-adenosyl-L-methionine site; that span reads ASAPGSK. Cysteine 246 functions as the Nucleophile in the catalytic mechanism.

The protein belongs to the class I-like SAM-binding methyltransferase superfamily. RsmB/NOP family.

It localises to the cytoplasm. It carries out the reaction cytidine(1407) in 16S rRNA + S-adenosyl-L-methionine = 5-methylcytidine(1407) in 16S rRNA + S-adenosyl-L-homocysteine + H(+). Functionally, specifically methylates the cytosine at position 1407 (m5C1407) of 16S rRNA. The polypeptide is Ribosomal RNA small subunit methyltransferase F (Shewanella baltica (strain OS223)).